Here is a 150-residue protein sequence, read N- to C-terminus: Cell division protein SepF (150 aa).

The protein belongs to the SepF family. As to quaternary structure, homodimer. Interacts with FtsZ.

It localises to the cytoplasm. Cell division protein that is part of the divisome complex and is recruited early to the Z-ring. Probably stimulates Z-ring formation, perhaps through the cross-linking of FtsZ protofilaments. Its function overlaps with FtsA. The chain is Cell division protein SepF from Clostridium botulinum (strain ATCC 19397 / Type A).